The sequence spans 339 residues: Lipoate--protein ligase (339 aa).

One can recognise a BPL/LPL catalytic domain in the interval 31–221 (FLDDDILFPY…QLLQIETISQ (191 aa)). ATP contacts are provided by residues Arg73, 78-81 (GAVY), Lys135, and Ala139. Lys135 provides a ligand contact to (R)-lipoate.

It belongs to the LplA family.

The catalysed reaction is L-lysyl-[lipoyl-carrier protein] + (R)-lipoate + ATP = N(6)-[(R)-lipoyl]-L-lysyl-[lipoyl-carrier protein] + AMP + diphosphate + H(+). It participates in protein modification; protein lipoylation via exogenous pathway; protein N(6)-(lipoyl)lysine from lipoate: step 1/2. Its pathway is protein modification; protein lipoylation via exogenous pathway; protein N(6)-(lipoyl)lysine from lipoate: step 2/2. Its function is as follows. Catalyzes specifically the lipoylation of GcvH-L (SpyM50867), likely via the ATP-dependent activation of lipoate to lipoyl-AMP and the transfer of the activated lipoyl onto the lipoyl domain of the target protein. This is Lipoate--protein ligase from Streptococcus pyogenes serotype M5 (strain Manfredo).